A 218-amino-acid chain; its full sequence is uncharacterized protein (218 aa).

This sequence belongs to the HAD-like hydrolase superfamily.

It localises to the cytoplasm. The protein localises to the nucleus. This is an uncharacterized protein from Saccharomyces cerevisiae (strain ATCC 204508 / S288c) (Baker's yeast).